A 192-amino-acid polypeptide reads, in one-letter code: Orotate phosphoribosyltransferase (192 aa).

Residues Arg-102, Lys-103, Lys-106, and Glu-129–Ser-137 each bind 5-phospho-alpha-D-ribose 1-diphosphate. Residues Thr-133 and Arg-161 each coordinate orotate.

The protein belongs to the purine/pyrimidine phosphoribosyltransferase family. PyrE subfamily. As to quaternary structure, homodimer. The cofactor is Mg(2+).

The enzyme catalyses orotidine 5'-phosphate + diphosphate = orotate + 5-phospho-alpha-D-ribose 1-diphosphate. It participates in pyrimidine metabolism; UMP biosynthesis via de novo pathway; UMP from orotate: step 1/2. Functionally, catalyzes the transfer of a ribosyl phosphate group from 5-phosphoribose 1-diphosphate to orotate, leading to the formation of orotidine monophosphate (OMP). The sequence is that of Orotate phosphoribosyltransferase from Prochlorococcus marinus (strain SARG / CCMP1375 / SS120).